We begin with the raw amino-acid sequence, 598 residues long: Elongation factor 4 (598 aa).

Residues 4 to 186 (INIRNFAIIA…AIVSRLPAPS (183 aa)) form the tr-type G domain. GTP-binding positions include 16–21 (DHGKST) and 133–136 (NKID).

Belongs to the TRAFAC class translation factor GTPase superfamily. Classic translation factor GTPase family. LepA subfamily.

The protein localises to the cell inner membrane. It catalyses the reaction GTP + H2O = GDP + phosphate + H(+). In terms of biological role, required for accurate and efficient protein synthesis under certain stress conditions. May act as a fidelity factor of the translation reaction, by catalyzing a one-codon backward translocation of tRNAs on improperly translocated ribosomes. Back-translocation proceeds from a post-translocation (POST) complex to a pre-translocation (PRE) complex, thus giving elongation factor G a second chance to translocate the tRNAs correctly. Binds to ribosomes in a GTP-dependent manner. The sequence is that of Elongation factor 4 from Ehrlichia ruminantium (strain Gardel).